The sequence spans 317 residues: Fe-S cluster assembly protein dre2 (317 aa).

Residues 22 to 152 (PVQAKRTLLL…KPNFEPSAAV (131 aa)) form an N-terminal SAM-like domain region. A linker region spans residues 153–209 (PLKFGLKKKNKPTPTAVPSIPTGFAAPMGIDSPVTNHDRDEDDELINEDTLLSEEDL). [2Fe-2S] cluster contacts are provided by Cys-219, Cys-230, Cys-233, and Cys-235. The interval 219–235 (CQPKTGRRRRACKDCTC) is fe-S binding site A. [4Fe-4S] cluster contacts are provided by Cys-280, Cys-283, Cys-291, and Cys-294. 2 short sequence motifs (cx2C motif) span residues 280 to 283 (CGSC) and 291 to 294 (CDGC). The segment at 280–294 (CGSCALGDAFRCDGC) is fe-S binding site B.

Belongs to the anamorsin family. In terms of assembly, monomer. Interacts with tah18. Interacts with mia40. [2Fe-2S] cluster serves as cofactor. The cofactor is [4Fe-4S] cluster.

It localises to the cytoplasm. The protein localises to the mitochondrion intermembrane space. Component of the cytosolic iron-sulfur (Fe-S) protein assembly (CIA) machinery required for the maturation of extramitochondrial Fe-S proteins. Part of an electron transfer chain functioning in an early step of cytosolic Fe-S biogenesis, facilitating the de novo assembly of a [4Fe-4S] cluster on the scaffold complex cfd1-nbp35. Electrons are transferred to dre2 from NADPH via the FAD- and FMN-containing protein tah18. Tah18-dre2 are also required for the assembly of the diferric tyrosyl radical cofactor of ribonucleotide reductase (RNR), probably by providing electrons for reduction during radical cofactor maturation in the catalytic small subunit rnr2. This chain is Fe-S cluster assembly protein dre2, found in Penicillium rubens (strain ATCC 28089 / DSM 1075 / NRRL 1951 / Wisconsin 54-1255) (Penicillium chrysogenum).